A 133-amino-acid polypeptide reads, in one-letter code: p53 and DNA damage-regulated protein 1 (133 aa).

It belongs to the prefoldin subunit beta family. In terms of assembly, component of the PAQosome complex which is responsible for the biogenesis of several protein complexes and which consists of R2TP complex members RUVBL1, RUVBL2, RPAP3 and PIH1D1, URI complex members PFDN2, PFDN6, PDRG1, UXT and URI1 as well as ASDURF, POLR2E and DNAAF10/WDR92.

Its subcellular location is the cytoplasm. Functionally, may play a role in chaperone-mediated protein folding. The chain is p53 and DNA damage-regulated protein 1 (Pdrg1) from Mus musculus (Mouse).